A 465-amino-acid polypeptide reads, in one-letter code: UDP-N-acetylmuramate--L-alanine ligase (465 aa).

112–118 contributes to the ATP binding site; sequence GTHGKTT.

It belongs to the MurCDEF family.

The protein localises to the cytoplasm. It catalyses the reaction UDP-N-acetyl-alpha-D-muramate + L-alanine + ATP = UDP-N-acetyl-alpha-D-muramoyl-L-alanine + ADP + phosphate + H(+). It participates in cell wall biogenesis; peptidoglycan biosynthesis. In terms of biological role, cell wall formation. This is UDP-N-acetylmuramate--L-alanine ligase from Burkholderia ambifaria (strain ATCC BAA-244 / DSM 16087 / CCUG 44356 / LMG 19182 / AMMD) (Burkholderia cepacia (strain AMMD)).